The following is a 149-amino-acid chain: Nucleoside diphosphate kinase (149 aa).

ATP-binding residues include K9, F57, R85, T91, R102, and N112. H115 (pros-phosphohistidine intermediate) is an active-site residue.

It belongs to the NDK family. Requires Mg(2+) as cofactor.

Its subcellular location is the cytoplasm. It carries out the reaction a 2'-deoxyribonucleoside 5'-diphosphate + ATP = a 2'-deoxyribonucleoside 5'-triphosphate + ADP. It catalyses the reaction a ribonucleoside 5'-diphosphate + ATP = a ribonucleoside 5'-triphosphate + ADP. Its function is as follows. Major role in the synthesis of nucleoside triphosphates other than ATP. The ATP gamma phosphate is transferred to the NDP beta phosphate via a ping-pong mechanism, using a phosphorylated active-site intermediate. The polypeptide is Nucleoside diphosphate kinase (Methanoculleus marisnigri (strain ATCC 35101 / DSM 1498 / JR1)).